The following is a 330-amino-acid chain: Protein RfbI (330 aa).

Residues 3-89 form the 2Fe-2S ferredoxin-type domain; it reads HIIKIFPSNI…ELNAHFFPEL (87 aa). [2Fe-2S] cluster contacts are provided by C37, C42, and C45. The FAD-binding FR-type domain occupies 94 to 192; that stretch reads KKIVPCKVNS…EGPCGTFFIR (99 aa).

The cofactor is [2Fe-2S] cluster.

Its pathway is bacterial outer membrane biogenesis; LPS O-antigen biosynthesis. This chain is Protein RfbI (rfbI), found in Salmonella typhimurium (strain LT2 / SGSC1412 / ATCC 700720).